Consider the following 136-residue polypeptide: Large ribosomal subunit protein bL17 (136 aa).

The protein belongs to the bacterial ribosomal protein bL17 family. As to quaternary structure, part of the 50S ribosomal subunit. Contacts protein L32.

The sequence is that of Large ribosomal subunit protein bL17 from Methylobacterium radiotolerans (strain ATCC 27329 / DSM 1819 / JCM 2831 / NBRC 15690 / NCIMB 10815 / 0-1).